The sequence spans 151 residues: uncharacterized protein (151 aa).

Positions R48–F151 are disordered. Residues P55–K77 are compositionally biased toward polar residues. Low complexity-rich tracts occupy residues P85–S105 and K123–R141.

This is an uncharacterized protein from Schizosaccharomyces pombe (strain 972 / ATCC 24843) (Fission yeast).